The chain runs to 156 residues: Small ribosomal subunit protein uS7 (156 aa).

This sequence belongs to the universal ribosomal protein uS7 family. Part of the 30S ribosomal subunit. Contacts proteins S9 and S11.

One of the primary rRNA binding proteins, it binds directly to 16S rRNA where it nucleates assembly of the head domain of the 30S subunit. Is located at the subunit interface close to the decoding center, probably blocks exit of the E-site tRNA. In Rhizobium johnstonii (strain DSM 114642 / LMG 32736 / 3841) (Rhizobium leguminosarum bv. viciae), this protein is Small ribosomal subunit protein uS7.